The following is a 228-amino-acid chain: L-ribulose-5-phosphate 4-epimerase UlaF (228 aa).

Substrate contacts are provided by residues 26–27 (GN), 43–44 (SG), and 72–73 (SS). Positions 74, 93, and 95 each coordinate Zn(2+). Residue D118 is the Proton donor/acceptor of the active site. H167 is a binding site for Zn(2+). Y225 acts as the Proton donor/acceptor in catalysis.

This sequence belongs to the aldolase class II family. AraD/FucA subfamily. Zn(2+) serves as cofactor.

It catalyses the reaction L-ribulose 5-phosphate = D-xylulose 5-phosphate. The protein operates within cofactor degradation; L-ascorbate degradation; D-xylulose 5-phosphate from L-ascorbate: step 4/4. Functionally, catalyzes the isomerization of L-ribulose 5-phosphate to D-xylulose 5-phosphate. Is involved in the anaerobic L-ascorbate utilization. The sequence is that of L-ribulose-5-phosphate 4-epimerase UlaF from Escherichia coli (strain K12 / MC4100 / BW2952).